A 164-amino-acid polypeptide reads, in one-letter code: B-phycoerythrin alpha chain (164 aa).

Cysteine 82 and cysteine 139 together coordinate (2R,3E)-phycoerythrobilin.

It belongs to the phycobiliprotein family. As to quaternary structure, heteromer of 6 alpha, 6 beta and one gamma chain. In terms of processing, contains two covalently linked bilin chromophores.

Its subcellular location is the plastid. It is found in the chloroplast thylakoid membrane. Its function is as follows. Light-harvesting photosynthetic bile pigment-protein from the phycobiliprotein complex. This is B-phycoerythrin alpha chain (cpeA) from Porphyridium purpureum (Red alga).